The primary structure comprises 92 residues: MTQQGNSGERKPRGKGPKRPRKPKVDPFSIGELEITDYKDVKMLRRFVSDTGKILPRRRTGLSAKHQRRIAQTIKVARQLALLPYTEKLVRK.

Residues 1 to 28 (MTQQGNSGERKPRGKGPKRPRKPKVDPF) form a disordered region. Residues 12-22 (PRGKGPKRPRK) show a composition bias toward basic residues.

This sequence belongs to the bacterial ribosomal protein bS18 family. In terms of assembly, part of the 30S ribosomal subunit. Forms a tight heterodimer with protein bS6.

Functionally, binds as a heterodimer with protein bS6 to the central domain of the 16S rRNA, where it helps stabilize the platform of the 30S subunit. The chain is Small ribosomal subunit protein bS18 from Deinococcus radiodurans (strain ATCC 13939 / DSM 20539 / JCM 16871 / CCUG 27074 / LMG 4051 / NBRC 15346 / NCIMB 9279 / VKM B-1422 / R1).